A 475-amino-acid polypeptide reads, in one-letter code: Protein translocase subunit SecD (475 aa).

6 helical membrane-spanning segments follow: residues 7–27, 313–333, 338–358, 364–384, 410–430, and 437–457; these read LLITVTLLAFSVWALWPSLKF, KGFMSSLIGIVLVFLFMFIYY, LIADVALSLNLIILMAIMAYL, LPGVAGIALTLAMSVDANVLI, FWTIFDANFTTLIAALFLFQF, and GFAVTLSIGLIVSMFTAVTVT.

Belongs to the SecD/SecF family. SecD subfamily. As to quaternary structure, forms a complex with SecF. Part of the essential Sec protein translocation apparatus which comprises SecA, SecYEG and auxiliary proteins SecDF. Other proteins may also be involved.

It is found in the cell inner membrane. In terms of biological role, part of the Sec protein translocase complex. Interacts with the SecYEG preprotein conducting channel. SecDF uses the proton motive force (PMF) to complete protein translocation after the ATP-dependent function of SecA. The chain is Protein translocase subunit SecD from Endomicrobium trichonymphae.